A 614-amino-acid polypeptide reads, in one-letter code: Dihydroxy-acid dehydratase (614 aa).

Asp81 serves as a coordination point for Mg(2+). Cys122 lines the [2Fe-2S] cluster pocket. Asp123 and Lys124 together coordinate Mg(2+). Lys124 is subject to N6-carboxylysine. Cys193 is a [2Fe-2S] cluster binding site. Residue Glu489 coordinates Mg(2+). Ser515 functions as the Proton acceptor in the catalytic mechanism.

It belongs to the IlvD/Edd family. In terms of assembly, homodimer. [2Fe-2S] cluster is required as a cofactor. It depends on Mg(2+) as a cofactor.

The catalysed reaction is (2R)-2,3-dihydroxy-3-methylbutanoate = 3-methyl-2-oxobutanoate + H2O. It carries out the reaction (2R,3R)-2,3-dihydroxy-3-methylpentanoate = (S)-3-methyl-2-oxopentanoate + H2O. It participates in amino-acid biosynthesis; L-isoleucine biosynthesis; L-isoleucine from 2-oxobutanoate: step 3/4. Its pathway is amino-acid biosynthesis; L-valine biosynthesis; L-valine from pyruvate: step 3/4. Functionally, functions in the biosynthesis of branched-chain amino acids. Catalyzes the dehydration of (2R,3R)-2,3-dihydroxy-3-methylpentanoate (2,3-dihydroxy-3-methylvalerate) into 2-oxo-3-methylpentanoate (2-oxo-3-methylvalerate) and of (2R)-2,3-dihydroxy-3-methylbutanoate (2,3-dihydroxyisovalerate) into 2-oxo-3-methylbutanoate (2-oxoisovalerate), the penultimate precursor to L-isoleucine and L-valine, respectively. The sequence is that of Dihydroxy-acid dehydratase from Hahella chejuensis (strain KCTC 2396).